A 493-amino-acid chain; its full sequence is Aluminum-activated malate transporter 1 (493 aa).

Helical transmembrane passes span 28 to 48, 51 to 71, 104 to 124, 133 to 153, and 169 to 189; these read VGLALVLVSSFYYYQPFGPFT, FGINAMWAVMTVVVVFEFSVG, TVEPILLVMLVFVQAALSTFV, KFDYGILIFILTFALISLSGF, and VVIGGVSCILISIFVCPVWAG. A phosphoserine mark is found at Ser320 and Ser327. The residue at position 385 (Thr385) is a Phosphothreonine. Positions 441-452 are enriched in basic and acidic residues; the sequence is DNDRSNNVDDSR. The disordered stretch occupies residues 441–460; it reads DNDRSNNVDDSRGGSSQDSC.

Belongs to the aromatic acid exporter (TC 2.A.85) family. Phosphorylated. A reversible phosphorylation is required for activation. In terms of tissue distribution, expressed in roots, but not in shoots. Detected in the root apex in absence of aluminum stress and in root apices, the stele and endodermis of the elongating zone of primary and lateral roots after aluminum stress. Not expressed in cortical and epidermal cells.

Its subcellular location is the cell membrane. With respect to regulation, activated by external aluminum. Functionally, malate transporter critical for aluminum tolerance. The STOP1 transcription factor is required for ALMT1 expression. The protein is Aluminum-activated malate transporter 1 (ALMT1) of Arabidopsis thaliana (Mouse-ear cress).